A 1464-amino-acid polypeptide reads, in one-letter code: Nuclear pore complex protein NUP155 (1464 aa).

At Ser-2 the chain carries N-acetylserine.

It belongs to the non-repetitive/WGA-negative nucleoporin family. Part of the nuclear pore complex (NPC). The NPC has an eight-fold symmetrical structure comprising a central transport channel and two rings, the cytoplasmic and nuclear rings, to which eight filaments are attached. The cytoplasmic filaments have loose ends, while the nuclear filaments are joined in a distal ring, forming a nuclear basket. NPCs are highly dynamic in configuration and composition, and can be devided in 3 subcomplexes, the NUP62 subcomplex, the NUP107-160 subcomplex and the NUP93 subcomplex, containing approximately 30 different nucleoporin proteins.

The protein localises to the nucleus. It localises to the nuclear pore complex. Major component of the nuclear pore complex (NPC). The chain is Nuclear pore complex protein NUP155 from Arabidopsis thaliana (Mouse-ear cress).